A 401-amino-acid chain; its full sequence is Restriction of telomere capping protein 4 (401 aa).

Ser-23 carries the phosphoserine modification. Basic and acidic residues predominate over residues 35–48 (KHDIHDRESDDLSG). The tract at residues 35–59 (KHDIHDRESDDLSGHDAFSPSKKRG) is disordered.

This sequence belongs to the RTC4 family.

It is found in the cytoplasm. The protein localises to the nucleus. Functionally, may be involved in a process influencing telomere capping. The protein is Restriction of telomere capping protein 4 (RTC4) of Saccharomyces cerevisiae (strain ATCC 204508 / S288c) (Baker's yeast).